We begin with the raw amino-acid sequence, 269 residues long: tRNA pseudouridine synthase A (269 aa).

D52 serves as the catalytic Nucleophile. Y110 is a binding site for substrate.

It belongs to the tRNA pseudouridine synthase TruA family. In terms of assembly, homodimer.

The enzyme catalyses uridine(38/39/40) in tRNA = pseudouridine(38/39/40) in tRNA. Formation of pseudouridine at positions 38, 39 and 40 in the anticodon stem and loop of transfer RNAs. The protein is tRNA pseudouridine synthase A of Bacteroides thetaiotaomicron (strain ATCC 29148 / DSM 2079 / JCM 5827 / CCUG 10774 / NCTC 10582 / VPI-5482 / E50).